The chain runs to 134 residues: Complexin-1 (134 aa).

Disordered stretches follow at residues 1-60 (MEFV…AERE) and 74-114 (KKEE…EEDE). A compositionally biased stretch (basic and acidic residues) spans 15–60 (DMGKMLGGDEEKDPDAAKKEEERQEALRQAEEERKAKYAKMEAERE). The stretch at 29–64 (DAAKKEEERQEALRQAEEERKAKYAKMEAEREVMRQ) forms a coiled coil. Residues 48–70 (RKAKYAKMEAEREVMRQGIRDKY) form an interaction with the SNARE complex region.

Belongs to the complexin/synaphin family. Binds to the SNARE core complex containing SNAP25, VAMP2 and STX1A. Nervous system, and pancreatic islet cells. Present in many brain regions, including hippocampus and cerebellum. In the retina, present at conventional amacrine cell synapses (at protein level).

It is found in the cytoplasm. It localises to the cytosol. Its subcellular location is the perikaryon. The protein localises to the presynapse. In terms of biological role, positively regulates a late step in exocytosis of various cytoplasmic vesicles, such as synaptic vesicles and other secretory vesicles. Organizes the SNAREs into a cross-linked zigzag topology that, when interposed between the vesicle and plasma membranes, is incompatible with fusion, thereby preventing SNAREs from releasing neurotransmitters until an action potential arrives at the synapse. Also involved in glucose-induced secretion of insulin by pancreatic beta-cells. Essential for motor behavior. This Mus musculus (Mouse) protein is Complexin-1 (Cplx1).